The primary structure comprises 236 residues: MEFKMQKIILGMLVVTASNAMALNNNFNVYGKVGVDLVSRFDTIAITRHDTQAPKNTARFSPSLFAEITYNATPKTEVGLGLGYIHRKSSHHIIKQKTDNGNRALIDVIEEYPVNRYNSIPLYFLVKHNFYSQSDLRSYLKVDFGYAFNKTKSTLNLTESTDAAGNNQYYIEKHNISLNVENGNYYGIGFGVEYKNILAEIAYTHTDSRLTYSSKLIRGESEYKNDALRFSVGYRF.

The N-terminal stretch at 1–22 (MEFKMQKIILGMLVVTASNAMA) is a signal peptide.

This is an uncharacterized protein from Pasteurella multocida (strain Pm70).